The chain runs to 1011 residues: Poly [ADP-ribose] polymerase 1 (1011 aa).

2 PARP-type zinc fingers span residues 9–91 (YRAE…ETGA) and 113–203 (FAAE…PATK). Zn(2+) is bound by residues C21, C24, H53, C56, C125, C128, H159, and C162. The segment at 198 to 235 (QLPATKTEGKRKGEEVDGNVVAKKKSRKEKEKESKQEK) is disordered. 2 consecutive short sequence motifs (nuclear localization signal) follow at residues 207 to 209 (KRK) and 220 to 225 (KKKSRK). The PADR1 zinc-binding domain maps to 224–358 (RKEKEKESKQ…CKKQDRIFPP (135 aa)). Over residues 225–235 (KEKEKESKQEK) the composition is skewed to basic and acidic residues. Residues 289 to 331 (GALLPCEECKGQFVFKSDAYYCSGDITAWTKCVAKTQTPNRKD) are zinc ribbon. Zn(2+) is bound by residues C294, C297, C310, and C320. Positions 359-378 (EAATVNSAPPPPASAPLTET) are disordered. The interval 371-522 (ASAPLTETVT…PSKSEKKMKL (152 aa)) is automodification domain. In terms of domain architecture, BRCT spans 382-473 (PQDKPLTNMK…KGFQELLSLH (92 aa)). PolyADP-ribosyl glutamic acid is present on residues E403, E404, E410, E411, E432, E434, E441, E442, E453, E454, E468, E481, E485, E488, E509, E510, and E517. The disordered stretch occupies residues 496 to 519 (SKPANMKSAGKVKEEQGPSKSEKK). Residues 506-519 (KVKEEQGPSKSEKK) show a composition bias toward basic and acidic residues. Positions 539–635 (SAHVFEKGGK…KNFTKYPKKF (97 aa)) constitute a WGR domain. The PARP alpha-helical domain maps to 659–776 (KSKLAKPIQD…DIEVAYSLLR (118 aa)). Positions 785 to 1011 (DPIDINYEKL…LKFNYKTSLW (227 aa)) constitute a PARP catalytic domain. NAD(+) contacts are provided by residues 859-861 (HGS), G868, R875, and S901. Catalysis depends on E985, which acts as the For poly [ADP-ribose] polymerase activity.

The protein belongs to the ARTD/PARP family. In terms of assembly, homodimer; PARP-type zinc-fingers from separate parp1 molecules form a dimer module that specifically recognizes DNA strand breaks. Post-translationally, poly-ADP-ribosylated on serine, glutamate and aspartate residues by autocatalysis. Auto-ADP-ribosylation on serine takes place following interaction with HPF1. Auto poly-ADP-ribosylation on serine residues promotes its dissociation from chromatin.

Its subcellular location is the chromosome. It is found in the nucleus. The protein resides in the nucleolus. The protein localises to the cytoplasm. It localises to the cytosol. It catalyses the reaction NAD(+) + (ADP-D-ribosyl)n-acceptor = nicotinamide + (ADP-D-ribosyl)n+1-acceptor + H(+).. It carries out the reaction L-seryl-[protein] + NAD(+) = O-(ADP-D-ribosyl)-L-seryl-[protein] + nicotinamide + H(+). The enzyme catalyses L-aspartyl-[protein] + NAD(+) = 4-O-(ADP-D-ribosyl)-L-aspartyl-[protein] + nicotinamide. The catalysed reaction is L-glutamyl-[protein] + NAD(+) = 5-O-(ADP-D-ribosyl)-L-glutamyl-[protein] + nicotinamide. It catalyses the reaction L-tyrosyl-[protein] + NAD(+) = O-(ADP-D-ribosyl)-L-tyrosyl-[protein] + nicotinamide + H(+). It carries out the reaction L-histidyl-[protein] + NAD(+) = N(tele)-(ADP-D-ribosyl)-L-histidyl-[protein] + nicotinamide + H(+). ADP-ribosyltransferase activity is regulated via an allosteric activation mechanism. In absence of activation signal, parp1 is autoinhibited by the PARP alpha-helical domain (also named HD region), which prevents effective NAD(+)-binding. Activity is highly stimulated by signals, such as DNA strand breaks. Binding to damaged DNA unfolds the PARP alpha-helical domain, relieving autoinhibition. Poly-ADP-ribosyltransferase activity is tightly regulated and parp1 is removed from damaged chromatin following initial poly-ADP-ribosylation of chromatin to avoid prolonged residence (trapping) that has cytotoxic consequences. A number of factors or post-translational modifications (auto-poly-ADP-ribosylation) promote parp1 removal from chromatin. Poly-ADP-ribosyltransferase that mediates poly-ADP-ribosylation of proteins and plays a key role in DNA repair. Mediates glutamate, aspartate, serine, histidine or tyrosine ADP-ribosylation of proteins: the ADP-D-ribosyl group of NAD(+) is transferred to the acceptor carboxyl group of target residues and further ADP-ribosyl groups are transferred to the 2'-position of the terminal adenosine moiety, building up a polymer with an average chain length of 20-30 units. Serine ADP-ribosylation of proteins constitutes the primary form of ADP-ribosylation of proteins in response to DNA damage. Specificity for the different amino acids is conferred by interacting factors, such as hpf1 and nmnat1. Following interaction with hpf1, catalyzes serine ADP-ribosylation of target proteins; hpf1 confers serine specificity by completing the parp1 active site. Also catalyzes tyrosine ADP-ribosylation of target proteins following interaction with hpf1. Following interaction with nmnat1, catalyzes glutamate and aspartate ADP-ribosylation of target proteins; nmnat1 confers glutamate and aspartate specificity. Parp1 initiates the repair of DNA breaks: recognizes and binds DNA breaks within chromatin and recruits hpf1, licensing serine ADP-ribosylation of target proteins, such as histones (H2BS6ADPr and H3S10ADPr), thereby promoting decompaction of chromatin and the recruitment of repair factors leading to the reparation of DNA strand breaks. In addition to base excision repair (BER) pathway, also involved in double-strand breaks (DSBs) repair. Mediates the poly-ADP-ribosylation of a number of proteins. In addition to proteins, also able to ADP-ribosylate DNA: catalyzes ADP-ribosylation of DNA strand break termini containing terminal phosphates and a 2'-OH group in single- and double-stranded DNA, respectively. Parp1-mediated DNA repair in neurons plays a role in sleep: senses DNA damage in neurons and promotes sleep, facilitating efficient DNA repair. In addition to DNA repair, also involved in other processes, such as transcription regulation, programmed cell death, membrane repair, adipogenesis and innate immunity. Acts as a repressor of transcription: binds to nucleosomes and modulates chromatin structure in a manner similar to histone H1, thereby altering RNA polymerase II. Acts both as a positive and negative regulator of transcription elongation, depending on the context. Poly-ADP-ribose chains generated by parp1 also play a role in poly-ADP-ribose-dependent cell death, a process named parthanatos. Also acts as a negative regulator of the cGAS-STING pathway by mediating poly-ADP-ribosylation and inactivation of cgas. Acts as a negative regulator of adipogenesis by catalyzing poly ADP-ribosylation of histone H2B on 'Glu-35' (H2BE35ADPr). The chain is Poly [ADP-ribose] polymerase 1 (PARP1) from Gallus gallus (Chicken).